A 146-amino-acid polypeptide reads, in one-letter code: uncharacterized protein (146 aa).

A run of 4 helical transmembrane segments spans residues 1–21 (MFAN…AASL), 35–55 (AAVY…LFVG), 87–107 (GGAG…GVGH), and 111–131 (AIAA…GGHL).

It localises to the cell membrane. This is an uncharacterized protein from Mycobacterium tuberculosis (strain CDC 1551 / Oshkosh).